Consider the following 242-residue polypeptide: Small ribosomal subunit protein uS2 (242 aa).

It belongs to the universal ribosomal protein uS2 family.

The polypeptide is Small ribosomal subunit protein uS2 (Shewanella piezotolerans (strain WP3 / JCM 13877)).